Here is a 405-residue protein sequence, read N- to C-terminus: Multi-drug resistance efflux pump PmrA homolog (405 aa).

The next 12 membrane-spanning stretches (helical) occupy residues 13–33, 50–70, 88–108, 111–131, 147–167, 170–190, 216–236, 254–274, 286–306, 308–328, 350–370, and 374–394; these read LFIT…VMPF, LYSG…APIW, IVMT…WLLG, LLMG…ASQA, MVSG…WFGM, VFLI…FFVH, ILFG…SIEP, FISG…SSFL, LILI…FVQS, LQLG…TPSV, MCSN…AGYI, and AAIV…FINF.

This sequence belongs to the major facilitator superfamily. TCR/Tet family.

Its subcellular location is the cell membrane. Its function is as follows. Efflux pump for various substrates. The sequence is that of Multi-drug resistance efflux pump PmrA homolog (pmrA) from Lactococcus lactis subsp. lactis (strain IL1403) (Streptococcus lactis).